The primary structure comprises 268 residues: UPF0328 protein ECU03_0040 (268 aa).

This sequence belongs to the UPF0328 family.

In Encephalitozoon cuniculi (strain GB-M1) (Microsporidian parasite), this protein is UPF0328 protein ECU03_0040.